A 308-amino-acid chain; its full sequence is tRNA uridine(34) hydroxylase (308 aa).

A Rhodanese domain is found at 129–223 (QEKDVLILDA…YGKHPETQGV (95 aa)). C183 serves as the catalytic Cysteine persulfide intermediate.

Belongs to the TrhO family.

It carries out the reaction uridine(34) in tRNA + AH2 + O2 = 5-hydroxyuridine(34) in tRNA + A + H2O. Its function is as follows. Catalyzes oxygen-dependent 5-hydroxyuridine (ho5U) modification at position 34 in tRNAs. This is tRNA uridine(34) hydroxylase from Aster yellows witches'-broom phytoplasma (strain AYWB).